Reading from the N-terminus, the 649-residue chain is MPLGQRAGDKSESRYCGVEVLDFPAGEELPAVLSHSLSSSFDFLLAPLVDPDYRPTPGSVLPVAASDLVLGPAQWSSHIVGKINEWIDLDAEDEQLRLDSEITLKQEIAWASHLSLQACVLPPPKRSSCANYARVVNHILQGLTNLQLWLRIPLEKSEPMDEDHDGAKDNSDMSDTVDSWEWWNSFRLLCEHSSQLCVALDVLSTLPSMNSLGRWFGEPVRAAILQTNAFLTNARGYPCLSKRHQKLLTGFFNHSVQVIISGRSNHNVSQGGVLSGDENHTEDTAVRHALSPYLDYIAYIYQRMDPLPEQERFEINYRDFLQSPLQPLMDNLEAQTYETFEKDTVKYTQYQRAIAKALVDRVSDDDVSTTKTVLMVVGAGRGPLVRASLQAAEETGRKLKVYAVEKNPNAVITLHSLIKLEGWESLVTIISSDMRCWEAPEKADILVSELLGSFGDNELSPECLDGAQRFLKPDGISIPSSYTSFIEPITASKLHNDIKAHKDIAHFETAYVVKLHRIARLAPTQSVFTFDHPNPSPNASNQRYTKLKFEIPQETGSCLVHGFAGYFDAVLYKDVHLGIEPNTATPNMFSWFPIFFPLRKPIYVPSKTPIEVHFWRCCGATKVWYEWAVTAPSPSPIHNSNGRSYWVGL.

The tract at residues 10–300 (KSESRYCGVE…SPYLDYIAYI (291 aa)) is TIM barrel. Positions 321–627 (LQSPLQPLMD…CGATKVWYEW (307 aa)) constitute an SAM-dependent MTase PRMT-type domain. Tyr-337 is a binding site for S-adenosyl-L-methionine. Position 340 (Phe-340) interacts with a protein. S-adenosyl-L-methionine contacts are provided by residues 346 to 347 (KY), Glu-405, and 433 to 434 (DM). The a protein site is built by Glu-449 and Glu-458. Catalysis depends on proton donor/acceptor residues Glu-449 and Glu-458. Residues 479 to 649 (PSSYTSFIEP…SNGRSYWVGL (171 aa)) form a beta barrel region. Residues 491-507 (ASKLHNDIKAHKDIAHF) are dimerization.

It belongs to the class I-like SAM-binding methyltransferase superfamily. Protein arginine N-methyltransferase family.

It is found in the cytoplasm. The catalysed reaction is L-arginyl-[protein] + 2 S-adenosyl-L-methionine = N(omega),N(omega)'-dimethyl-L-arginyl-[protein] + 2 S-adenosyl-L-homocysteine + 2 H(+). Methylates arginine residues in proteins such as histone H4. In Oryza sativa subsp. indica (Rice), this protein is Protein arginine N-methyltransferase 5 (PRMT5).